The sequence spans 234 residues: Purine nucleoside phosphorylase DeoD-type (234 aa).

Histidine 4 lines the a purine D-ribonucleoside pocket. Phosphate is bound by residues glycine 20, arginine 24, arginine 43, and 87 to 90 (RVGT). Residues glutamate 162, 178–180 (EME), and 202–203 (SD) each bind a purine D-ribonucleoside. Residue aspartate 203 is the Proton donor of the active site.

The protein belongs to the PNP/UDP phosphorylase family. In terms of assembly, homohexamer; trimer of homodimers.

The enzyme catalyses a purine D-ribonucleoside + phosphate = a purine nucleobase + alpha-D-ribose 1-phosphate. It catalyses the reaction a purine 2'-deoxy-D-ribonucleoside + phosphate = a purine nucleobase + 2-deoxy-alpha-D-ribose 1-phosphate. Catalyzes the reversible phosphorolytic breakdown of the N-glycosidic bond in the beta-(deoxy)ribonucleoside molecules, with the formation of the corresponding free purine bases and pentose-1-phosphate. Its function is as follows. Cleavage of adenosine and its derivatives. The chain is Purine nucleoside phosphorylase DeoD-type from Geobacillus stearothermophilus (Bacillus stearothermophilus).